Here is a 256-residue protein sequence, read N- to C-terminus: Exosome complex component RRP41-like (256 aa).

This sequence belongs to the RNase PH family. Probable component of the RNA exosome complex. Highly expressed in imbibed seeds and young seedlings.

The protein localises to the cytoplasm. It is found in the nucleus. Functionally, non-catalytic component of the RNA exosome complex which has 3'-&gt;5' exoribonuclease activity and participates in a multitude of cellular RNA processing, maturation and degradation events. In vitro, is a processive phosphorolytic exonuclease and requires a single-stranded poly(A) tail on the substrate RNA for its activity. Plays an important role in seed germination and early seedling growth by mediating specific cytoplasmic mRNA decay of transcripts coding for the abscisic acid (ABA) biosynthetic enzymes NCED5 and NCED6, and the ABA signaling transcription factors ABI3 and ABI4. The sequence is that of Exosome complex component RRP41-like from Arabidopsis thaliana (Mouse-ear cress).